A 73-amino-acid polypeptide reads, in one-letter code: UPF0346 protein LVIS_0790 (73 aa).

This sequence belongs to the UPF0346 family.

This chain is UPF0346 protein LVIS_0790, found in Levilactobacillus brevis (strain ATCC 367 / BCRC 12310 / CIP 105137 / JCM 1170 / LMG 11437 / NCIMB 947 / NCTC 947) (Lactobacillus brevis).